Consider the following 208-residue polypeptide: Uracil phosphoribosyltransferase (208 aa).

Residues Arg-78, Arg-103, and 130–138 (DPMLATGGS) contribute to the 5-phospho-alpha-D-ribose 1-diphosphate site. Residues Ile-193 and 198 to 200 (GDA) each bind uracil. Asp-199 lines the 5-phospho-alpha-D-ribose 1-diphosphate pocket.

This sequence belongs to the UPRTase family. Mg(2+) serves as cofactor.

The enzyme catalyses UMP + diphosphate = 5-phospho-alpha-D-ribose 1-diphosphate + uracil. It participates in pyrimidine metabolism; UMP biosynthesis via salvage pathway; UMP from uracil: step 1/1. Allosterically activated by GTP. Its function is as follows. Catalyzes the conversion of uracil and 5-phospho-alpha-D-ribose 1-diphosphate (PRPP) to UMP and diphosphate. The polypeptide is Uracil phosphoribosyltransferase (Actinobacillus pleuropneumoniae serotype 5b (strain L20)).